Consider the following 4555-residue polypeptide: MGVTMRHCIDTRPPSCLIFLLLKLCATVSQGLPGTGPLGFHFTHALYNATVYENSAARTYVNSQSRMGITLIDLSWDIKYRIVSGDEEGFFKAEEVIIADFCFLRIRTKGGNSAILNREIQDNYLLIIKGSVRGEDLEAWTKVNIQVLDMNDLRPLFSPTTYSVTIAESTPLRTSVAQVTATDADIGSNGEFYYYFKNKVDLFSVHPTSGVISLSGRLNYDEKNRYDLEILAVDRGMKLYGNNGVSSTAKLYVHIERINEHAPIIHVVTHTPFSLDKEPTYAVVTVDDLDEGANGEIESVSIVDGDPLEQFFLAKEGKWMNEYKVKERRQVDWESFSYGYNLTIQAKDKGSPQKFSELKTVHIANPRRDSTPIKFEKDVYDISISEFSPPGVMVAIVKVNPEPLDVEYKLLPGKDAEYFKINPRSGLIVTAQPLNTVKKEVYKLEVSDKEGDAKAQVTIGIEDANDHTPEFQETLYETFVNESVPVGTNVLTVSASDKDKGENGYITYSIASLNLLPFAINQFTGVISTTEELDFESSPETYRFIVRASDWGSPYRHESEVNVTIRVGNVNDNSPLFEKVACQGVISYDFPVGGHITAISAIDIDELELVKYKIISGNELGFFYLNPDSGVLQLKKSLMNSGIKNGNFALRITATDGENFADPMAINISVLHGKVSSKSFSCRETRVAQKLAEKLLIKAKANGKLNQEDGFLDFYSINRQGPHFDKSFPSDVAVKENMPVGTNILKIKAYDADSGFNGKVLFTISDGNTDSCFNIDMETGQLKVLMPMDREHTDLYVLNITIYDLGKPQKSSWRLLTVNVEDANDNSPVFLQDSYSVSILESSSIGTEIIQVEARDKDLGSNGEVTYSVLTDTHQFVINSSTGIVYIADQLDRESKANYSLKIEARDKAESGQQLFSVVTLKIFLDDVNDCSPAFIPSSYSVKVLEDLPVGTVIAWLETQDPDLGLGGQVRYSLVNDYNGRFEIDKASGAIRLSKELDYEKQQFYNLTVRAKDKGRPVSLSSISFVEVEVVDVNENLHTPYFPDFAVVGSVKENSRIGTSVLQVTAHDEDSGRDGEIQYSIRDGSGLGRFNIDDESGVITAADILDRETTASYWLTVYATDRGVVPLYSTIEVYIEVEDVNDNAPLTSEPIYYPVVMENSPKDVSVIQIQAEDPDSGSNEKLTYRITSGNPQNFFAINIKTGLITTTSRKLDREQQAEHFLEVTVTDGGSSPKQSTIWVVVQVLDENDNKPQFPEKVYQIKLPERDRKKRGEPIYRAFAFDRDEGPNAEISYSIVDGNDDGKFFIDPKTGMVSSRKQFTAGSYDILTIKAVDNGRPQKSSTARLHIEWIKKPPPSPIPLTFDEPFYNFTIMESDKVTEIVGVVSVQPANTPLWFDIIGGNFDSSFDAEKGVGTIVIAKPLDAEQRSVYNMSVEVTDGTNVAVTQVFITVLDNNDNGPEFSQPHYDVTISEDVPPDTEILQIEATDRDEKHKLSYTIHSSIDAISMRKFRIDPSTGVLYTAERLDHEAQDKHILNIMVRDQEFPYRRNLARVIVNVEDANDHSPYFTNPLYEASVFESAALGSVVLQVTALDKDKGENAELIYSIEAGNTGNTFKIEPVLGIITISKEPDMTAMGQFVLSVKVTDQGSPPMSATAIVRISISMSDNSHPKFTHKDYQAEVNENVDIGTSVILISAISQSTLIYEVKDGNINGVFTINPYSGVITTRRALDYEHTSSYQLIIQATNMAGMASNATVSVQVVDENDNPPVFLFSQYSGSLSEAAPINSLVRSLDNSPLVIRATDADSNQNALLVYQIVESTAKKFFTVDSSTGAIRTIANLDHEVIAHFHFHVHVRDSGNPQLTAESPVEVNIEVTDVNDNPPVFTQAVFETVLLLPTYVGVEVLKVSATDPDSEVPPELTYSLMEGSVDHFLMDPNTGVLTIKNNNLSKDHYMLIVRVSDGKFYSTAMVTIMVKEAMDSGLHFTQSFYSTSISENSTNITKVAIVNAVGNRLNEPLKYSILNPGNKFKIKSTSGVIQTTGVPFDREEQELYELVVEASRELDHLRVARVVVRVNIEDVNDNSPVFVGLPYYAAVQVDAEPGTLIYRVTAIDKDKGANGEVTYVLQDDYGHFEINPNSGNVILKEAFNSDLSNIDYGVTILAKDGGTPSLSTFVELPITIVNKAMPVFDKPFYTASINEDISINTPILSINATSPEGQGIIYLIIDGDPFQQFNIDFDTGVLKVISPLDYEVMSVYKLTVRASDALTGARAEVTVDLLVDDVNDNPPVFDQPTYNTTLSESSLIGTPVLQLVSTDADSGNNNLVHYQIVQDTYNSTDYFHIDSSSGLILTARMLDHELVQHCTLKVTATDNGFPSLSSEVLVQIYISDVNDNPPVFNQLIYESYVSELAPRGHFVTCVQASDADSSDFDRLEYSILSGNDRTSFLMDSKSGVLTLSSHRKQRMEPLYSLNVSVSDGLFTSTAQVHIRVLGANLYSPAFSQSTYVAEVRENAASGTKVIHVRATDGDPGTYGQVSYSIINDFAKDRFLIDSNGQIITTERLDRENPLEGDISIYLRALDGGGRTTFCTVRVIVVDENDNAPQFMTLEYRASVRADVGRGHLVTQVQALDPDDGANSRITYSLYSEASVSVADLLEIDPDNGWMVTKGNFNQLRNTVLSFFVKAVDGGIPVRHSLIPVYIHVLPPETFLPSFTQSQYSFTIAEDTSIGSTIDTLRILPNQSVRFSTVNGERPENNKENVFIIEQETGAIKLDKRLDHEVSPAFHFKVAATIPLDKVDIVFTVDVDVKVLDLNDNKPVFETSSYETIIMEGMPVGTKLAQVRAIDTDWGANGQVTYSLHSDSHLEKVMEAFNIDSNTGWISTLKDLDHETDPTFSFFVVASDLGEAFSLSSMALVSVKVTDINDNAPVFAHEVYRGNVKESDPPGEVVAVLSTLDKDTSNINRQVSYHITGGNPRGRFALGMVQSEWKVYVKRPLDREEQDIYFLNITASDGLFVTQAMVEVTVSDVNDNSPVCDQVAYSASLPEDIPSNKIILKVSAKDADIGSNGDIRYSLYGSGNSDFFLDPESGELKTLALLDRERVPVYNLIARATDGGGRFCSSTVLLLLEDVNDNPPVFSSNHYTACVYENTATKALLTRVQAVDPDVGINRKVVYSLEDSASGVFSIDSSSGVIVLEQPLDREQQSSYNISVRATDQSPGQSLSSLTSVTITVLDINDNPPVFERRDYLVTVPEDTSLGTQVLSVFATSKDIGTNAEITYLIRSGNEQGKFRINPKTGGISVLEALDYEMCKRFYLVVEAKDGGTPALSTAATVSIDLTDVNDNPPRFSQDVYSAVISEDALEGDSVILLIAEDVDSKPNGQIRFSIVGGDRDNEFAVDPILGLVKVKKKLDRERVSGYSLLIQAVDSGIPAMSSTTTVNIDISDVNDNSPVFTPANYTAVIQENKPVGTSILQLVVTDRDSFHNGPPFSFSILSGNEDEEFMLDSHGILRSAVVFRHMESPEYLLCIQAKDSGKPQQVSHTYIRVRVIEESTHKPTAIPLEIFIVTMEDDFPGGVIGKIHATDQDMYDVLTFALKSEQKSLFKVNSHDGKIIALGGLDSGKYVLNVSVSDGRFQVPIDVVVHVEQLVHEMLQNTVTIRFENVSPEDFVGLHMHGFRRILRNAVLTQKQDSLRIISIQPVVGTNQLDMLFAVEMHSSEFYKPAYLIQKLSNARRHLENVMHIAAILEKNCSGLDCQEQHCEQGLSLDSHALMTYSTARISFVCPRFYRNVRCTCNGGVCPGSNDPCVEKPCPEDMQCVGYEASRRPFLCQCPPGKLGECSGHTSLSFAGNSYIKYRLSENSREEDFKLALRLRTLQSNGIIMYTRANPCMILKIVEGKLWFQLDCGSGPGILGISSRAVNDGSWHSVFLELNRNFTSLSLDDSYVERRRAPLYFQTLSTDSAIFFGALVQADNIRSLTDTRVTQVLGGFQGCLDSVVLNHNELPLQNKRSSFAEVVGLTELKLGCVLYPDACQRSPCLHGGSCSGLPSGGYQCSCLSQFTGTNCESEITACFPNPCRNGGSCDPIGNTFICSCKAGLTGVTCEDDVDECEREECENGGSCVNLFGSFFCNCTPGYVGQYCGLRPVVVPNIQAGHSYVGKEELIGIAVVLFVIFTLIVLFIVFRKKVFRKNYSRNNITLVQDPATAALLHKSNGIPFRSLRAGDGRNVYQEVGPPQVPVRPMAYTPCFQSDSRSNLDKGLDALGGEPQELSTFHPESPRILTARRGVVVCSVAPNLPAVSPCRSDCDSIRKNGWDTGSENKGAEDTGEVTCFANSNKGSNSEVQSLNSFQSDSGDDNAYHWDTSDWMPGARLSDIEEMPNYESQDGGAVHQGSTRELESDYYLGGYDIDSEYPPPHEEEFLSQDQLPPPLPEDFPEQYEALPPSQPTSLTGTMSPDCRRRPRFHPSQYLPPHPLPGETDLGGPPSSCDFSTFAVSMNQGTEVMAPTDSVSLSLHNSRGTSSSDMSARCGFDDSEVAMSDYESAGELSLTNLHIPFVETQHQTQV.

The signal sequence occupies residues 1–31; it reads MGVTMRHCIDTRPPSCLIFLLLKLCATVSQG. Residues 32–4153 are Extracellular-facing; sequence LPGTGPLGFH…AGHSYVGKEE (4122 aa). 33 Cadherin domains span residues 43 to 157, 158 to 265, 263 to 374, 376 to 471, 472 to 577, 578 to 680, 726 to 830, 831 to 935, 936 to 1042, 1043 to 1147, 1148 to 1253, 1254 to 1358, 1362 to 1459, 1460 to 1565, 1566 to 1768, 1769 to 1882, 1883 to 1985, 1982 to 2083, 2084 to 2185, 2186 to 2286, 2287 to 2393, 2394 to 2495, 2496 to 2599, 2600 to 2707, 2708 to 2813, 2814 to 2923, 2924 to 3028, 3029 to 3130, 3131 to 3235, 3236 to 3340, 3341 to 3445, 3446 to 3550, and 3551 to 3652; these read THAL…RPLF, SPTT…APII, PIIH…TPIK, EKDV…TPEF, QETL…SPLF, EKVA…SKSF, KSFP…SPVF, LQDS…SPAF, IPSS…TPYF, PDFA…APLT, SEPI…KPQF, PEKV…SPIP, DEPF…GPEF, SQPH…SPYF, TNPL…PPVF, LFSQ…PPVF, TQAV…TQSF, TQSF…SPVF, VGLP…MPVF, DKPF…PPVF, DQPT…PPVF, NQLI…SPAF, SQST…APQF, MTLE…LPSF, TQSQ…KPVF, ETSS…APVF, AHEV…SPVC, DQVA…PPVF, SSNH…PPVF, ERRD…PPRF, SQDV…SPVF, TPAN…KPTA, and IPLE…TIRF. N-linked (GlcNAc...) asparagine glycosylation occurs at Asn-48. An N-linked (GlcNAc...) asparagine glycan is attached at Asn-341. Asn-481, Asn-562, Asn-667, Asn-799, Asn-879, Asn-898, and Asn-1006 each carry an N-linked (GlcNAc...) asparagine glycan. N-linked (GlcNAc...) asparagine glycosylation is found at Asn-1367 and Asn-1429. The N-linked (GlcNAc...) asparagine glycan is linked to Asn-1751. Asn-1944, Asn-1993, and Asn-1996 each carry an N-linked (GlcNAc...) asparagine glycan. N-linked (GlcNAc...) asparagine glycans are attached at residues Asn-2208, Asn-2292, Asn-2331, and Asn-2467. N-linked (GlcNAc...) asparagine glycosylation occurs at Asn-2734. N-linked (GlcNAc...) asparagine glycosylation occurs at Asn-3000. Asn-3201 carries N-linked (GlcNAc...) asparagine glycosylation. 3 N-linked (GlcNAc...) asparagine glycosylation sites follow: Asn-3449, Asn-3618, and Asn-3741. The 39-residue stretch at 3794 to 3832 folds into the EGF-like 1 domain; it reads SNDPCVEKPCPEDMQCVGYEASRRPFLCQCPPGKLGECS. Disulfide bonds link Cys-3798–Cys-3809, Cys-3803–Cys-3821, and Cys-3823–Cys-3831. Positions 3834 to 4017 constitute a Laminin G-like domain; that stretch reads HTSLSFAGNS…VGLTELKLGC (184 aa). An N-linked (GlcNAc...) asparagine glycan is attached at Asn-3926. 10 disulfides stabilise this stretch: Cys-3984–Cys-4017, Cys-4024–Cys-4035, Cys-4029–Cys-4045, Cys-4047–Cys-4056, Cys-4063–Cys-4074, Cys-4068–Cys-4083, Cys-4085–Cys-4094, Cys-4101–Cys-4112, Cys-4106–Cys-4121, and Cys-4123–Cys-4132. EGF-like domains are found at residues 4020–4057 and 4059–4095; these read YPDACQRSPCLHGGSCSGLPSGGYQCSCLSQFTGTNCE and EITACFPNPCRNGGSCDPIGNTFICSCKAGLTGVTCE. The 37-residue stretch at 4097-4133 folds into the EGF-like 4; calcium-binding domain; that stretch reads DVDECEREECENGGSCVNLFGSFFCNCTPGYVGQYCG. The chain crosses the membrane as a helical span at residues 4154–4174; sequence LIGIAVVLFVIFTLIVLFIVF. The Cytoplasmic portion of the chain corresponds to 4175–4555; sequence RKKVFRKNYS…FVETQHQTQV (381 aa). Residues 4326-4343 show a composition bias toward polar residues; it reads SNKGSNSEVQSLNSFQSD. 3 disordered regions span residues 4326 to 4347, 4395 to 4424, and 4452 to 4472; these read SNKGSNSEVQSLNSFQSDSGDD, GGYDIDSEYPPPHEEEFLSQDQLPPPLPED, and PRFHPSQYLPPHPLPGETDLG. Omega-N-methylarginine occurs at positions 4508 and 4518.

Restricted to the nervous system. Abundantly expressed in the fetal brain.

It localises to the membrane. Functionally, may play a role in the interactions between neurites derived from specific subsets of neurons during development. In Rattus norvegicus (Rat), this protein is Protocadherin Fat 3 (Fat3).